The chain runs to 199 residues: A-type ATP synthase subunit E (199 aa).

The protein belongs to the V-ATPase E subunit family. As to quaternary structure, has multiple subunits with at least A(3), B(3), C, D, E, F, H, I and proteolipid K(x).

The protein resides in the cell membrane. In terms of biological role, component of the A-type ATP synthase that produces ATP from ADP in the presence of a proton gradient across the membrane. The polypeptide is A-type ATP synthase subunit E (Pyrococcus abyssi (strain GE5 / Orsay)).